We begin with the raw amino-acid sequence, 400 residues long: MTDFRTLDDAGPLQGKRVLLRVDLNVPMEGGRVTDATRIERVVPTIREIADAGGRVILLAHFGRPKGKPDPKDSLKPILSTLSEKLGRPVAFGEDCVGEAAASAVAALKDGDVILLENTRYHAGEEKNDPDFAKALAANGDIYVNEAFSAAHRAHASTEALARLLPAYAGRLMQAELDALTKGLEAPARPVIAIVGGAKVSTKIDLLENLVAKVDMLVIGGGMANTFLHAQGKDVGKSLCEKDLAETAKRILAAAKEKNCTIILPVDALVAREFRANAENETVPVDAVPSDAMILDVGASSIATIDGAIEEARTLVWNGPLGAFELTPFDTGTVAVAQHAARRTKAGQLVSVAGGGDTVAALNHAGVGEDFSYVSTAGGAFLEWLEGKELPGVEALRAQG.

Substrate contacts are provided by residues 23–25 (DLN), Arg38, 61–64 (HFGR), Arg120, and Arg153. ATP-binding positions include Lys203, Glu325, and 355-358 (GGDT).

This sequence belongs to the phosphoglycerate kinase family. Monomer.

The protein resides in the cytoplasm. The catalysed reaction is (2R)-3-phosphoglycerate + ATP = (2R)-3-phospho-glyceroyl phosphate + ADP. It functions in the pathway carbohydrate degradation; glycolysis; pyruvate from D-glyceraldehyde 3-phosphate: step 2/5. The protein is Phosphoglycerate kinase of Methylorubrum extorquens (strain CM4 / NCIMB 13688) (Methylobacterium extorquens).